A 1064-amino-acid polypeptide reads, in one-letter code: Carbamoyl phosphate synthase large chain (1064 aa).

A carboxyphosphate synthetic domain region spans residues 1-401 (MPKRNDIKKI…SLLKAVRSLE (401 aa)). ATP is bound by residues arginine 129, arginine 169, glycine 175, glycine 176, glutamate 208, isoleucine 210, glutamate 215, glycine 241, valine 242, histidine 243, glutamine 284, and glutamate 298. In terms of domain architecture, ATP-grasp 1 spans 133–327 (KELCERIGEP…IAKMSAKIAI (195 aa)). Positions 284, 298, and 300 each coordinate Mg(2+). Residues glutamine 284, glutamate 298, and asparagine 300 each coordinate Mn(2+). The oligomerization domain stretch occupies residues 402–546 (IGVFHNDLQE…YSTYEWENES (145 aa)). Residues 547 to 929 (KRSSKEKIIV…ALYKSFEAAK (383 aa)) are carbamoyl phosphate synthetic domain. Residues 671 to 861 (EKALQDLEIP…MAQLATQMIL (191 aa)) form the ATP-grasp 2 domain. Residues arginine 707, serine 746, leucine 748, glutamate 752, glycine 777, valine 778, histidine 779, serine 780, glutamine 820, and glutamate 832 each coordinate ATP. Residues glutamine 820, glutamate 832, and asparagine 834 each contribute to the Mg(2+) site. The Mn(2+) site is built by glutamine 820, glutamate 832, and asparagine 834. Residues 930 to 1064 (LHMADYGSVL…QSRSFTTKNI (135 aa)) enclose the MGS-like domain. The allosteric domain stretch occupies residues 930–1064 (LHMADYGSVL…QSRSFTTKNI (135 aa)).

The protein belongs to the CarB family. As to quaternary structure, composed of two chains; the small (or glutamine) chain promotes the hydrolysis of glutamine to ammonia, which is used by the large (or ammonia) chain to synthesize carbamoyl phosphate. Tetramer of heterodimers (alpha,beta)4. Mg(2+) serves as cofactor. Requires Mn(2+) as cofactor.

The catalysed reaction is hydrogencarbonate + L-glutamine + 2 ATP + H2O = carbamoyl phosphate + L-glutamate + 2 ADP + phosphate + 2 H(+). The enzyme catalyses hydrogencarbonate + NH4(+) + 2 ATP = carbamoyl phosphate + 2 ADP + phosphate + 2 H(+). It functions in the pathway amino-acid biosynthesis; L-arginine biosynthesis; carbamoyl phosphate from bicarbonate: step 1/1. It participates in pyrimidine metabolism; UMP biosynthesis via de novo pathway; (S)-dihydroorotate from bicarbonate: step 1/3. Functionally, large subunit of the glutamine-dependent carbamoyl phosphate synthetase (CPSase). CPSase catalyzes the formation of carbamoyl phosphate from the ammonia moiety of glutamine, carbonate, and phosphate donated by ATP, constituting the first step of 2 biosynthetic pathways, one leading to arginine and/or urea and the other to pyrimidine nucleotides. The large subunit (synthetase) binds the substrates ammonia (free or transferred from glutamine from the small subunit), hydrogencarbonate and ATP and carries out an ATP-coupled ligase reaction, activating hydrogencarbonate by forming carboxy phosphate which reacts with ammonia to form carbamoyl phosphate. The sequence is that of Carbamoyl phosphate synthase large chain from Lactococcus lactis subsp. lactis (strain IL1403) (Streptococcus lactis).